The following is a 110-amino-acid chain: Large ribosomal subunit protein uL22 (110 aa).

This sequence belongs to the universal ribosomal protein uL22 family. As to quaternary structure, part of the 50S ribosomal subunit.

Its function is as follows. This protein binds specifically to 23S rRNA; its binding is stimulated by other ribosomal proteins, e.g. L4, L17, and L20. It is important during the early stages of 50S assembly. It makes multiple contacts with different domains of the 23S rRNA in the assembled 50S subunit and ribosome. Functionally, the globular domain of the protein is located near the polypeptide exit tunnel on the outside of the subunit, while an extended beta-hairpin is found that lines the wall of the exit tunnel in the center of the 70S ribosome. The protein is Large ribosomal subunit protein uL22 of Nitrosomonas europaea (strain ATCC 19718 / CIP 103999 / KCTC 2705 / NBRC 14298).